Reading from the N-terminus, the 355-residue chain is IgG receptor FcRn large subunit p51 (355 aa).

Residues 1–24 (MRVPRSQPWGLALLLLLLPGTLRA) form the signal peptide. The alpha-1 stretch occupies residues 25–111 (AESHRSLLYH…ALKVFGDRDS (87 aa)). Residues 25–300 (AESHRSLLYH…LESPAKSSVP (276 aa)) are Extracellular-facing. The tract at residues 112–201 (YTLQGLLGCE…ERGRGNLEWK (90 aa)) is alpha-2. Asparagine 126 carries N-linked (GlcNAc...) asparagine glycosylation. The segment at 202-291 (EPPSMRLKAR…GPAQPLTVEL (90 aa)) is alpha-3. One can recognise an Ig-like C1-type domain in the interval 203–292 (PPSMRLKARP…PAQPLTVELE (90 aa)). A disulfide bridge connects residues cysteine 222 and cysteine 276. Residues 293–298 (SPAKSS) are connecting peptide. The helical transmembrane segment at 301-321 (VIGISIGFLLLMTVAAGGALL) threads the bilayer. Over 322–355 (WRRRKGLPAPWIAFRGDDIGALLPTPGLSKDAES) the chain is Cytoplasmic.

It belongs to the immunoglobulin superfamily. In terms of assembly, fcRn complex consists of two subunits: p51, and p14 which is equivalent to beta-2-microglobulin. It forms an MHC class I-like heterodimer. Interacts with albumin/ALB; this interaction regulates ALB homeostasis. In terms of tissue distribution, expressed in liver and mammary gland of non-lactating animals. Expressed in hepatocytes and in epithelial cells of portal bile ductuli. Not expressed in the brances of portal veins or hepatic arteries. Expressed in the epithelial cells of the acini and ducti in the mammary gland with expression emphasized at the apical side. Not expressed in blood vessels of mammary gland.

The protein resides in the cell membrane. It localises to the endosome membrane. Its function is as follows. Cell surface receptor that transfers passive humoral immunity from the mother to the newborn. Binds to the Fc region of monomeric immunoglobulin gamma and mediates its selective uptake from milk. IgG in the milk is bound at the apical surface of the intestinal epithelium. The resultant FcRn-IgG complexes are transcytosed across the intestinal epithelium and IgG is released from FcRn into blood or tissue fluids. Throughout life, contributes to effective humoral immunity by recycling IgG and extending its half-life in the circulation. Mechanistically, monomeric IgG binding to FcRn in acidic endosomes of endothelial and hematopoietic cells recycles IgG to the cell surface where it is released into the circulation. In addition of IgG, regulates homeostasis of the other most abundant circulating protein albumin/ALB. The polypeptide is IgG receptor FcRn large subunit p51 (Camelus dromedarius (Dromedary)).